Here is a 247-residue protein sequence, read N- to C-terminus: Lysosomal membrane ascorbate-dependent ferrireductase CYB561A3 (247 aa).

Over 1–3 (MRG) the chain is Cytoplasmic. Residues 4-24 (IVGFYITYLLCLILGIACVVL) traverse the membrane as a helical segment. Positions 13 to 223 (LCLILGIACV…FGLVVLKILS (211 aa)) constitute a Cytochrome b561 domain. Residues 25–46 (VVHWNFMYRDGFAWDGSSKNFN) are Lumenal-facing. Residues 47–67 (WHPVLMVTGMLVLYGNAAVVY) traverse the membrane as a helical segment. 2 residues coordinate heme b: His48 and Arg68. At 68 to 82 (RIPLTWGHNKLPWKL) the chain is on the cytoplasmic side. L-ascorbate is bound by residues Lys77 and Lys81. A helical transmembrane segment spans residues 83 to 103 (LHAGLLLLSFIFSVIGLCAVF). Heme b contacts are provided by residues His84, 113 to 116 (NLYS), and His118. Residues 104 to 120 (NFHNVHHTANLYSLHSW) lie on the Lumenal side of the membrane. The helical transmembrane segment at 121–141 (VGICTAALFTAQWVMGFTSFL) threads the bilayer. The Cytoplasmic portion of the chain corresponds to 142-155 (LPCTPMAVRAFVKP). Arg150 provides a ligand contact to L-ascorbate. A helical membrane pass occupies residues 156–176 (THVWMGAMILVLSIVSCISGI). Positions 157 and 178 each coordinate heme b. The Lumenal portion of the chain corresponds to 177 to 201 (NEKLFFVLKETTNGTKPYSALPPEA). A glycan (N-linked (GlcNAc...) asparagine) is linked at Asn189. The chain crosses the membrane as a helical span at residues 202 to 222 (VAANSLGVIIVAFGLVVLKIL). The Cytoplasmic portion of the chain corresponds to 223–247 (SNQMWQRPEPGDDEGVYRPLAYDGS). Residue Gln228 coordinates heme b.

Homodimer. Requires heme b as cofactor.

It localises to the late endosome membrane. Its subcellular location is the lysosome membrane. The catalysed reaction is Fe(3+)(out) + L-ascorbate(in) = monodehydro-L-ascorbate radical(in) + Fe(2+)(out) + H(+). Functionally, transmembrane reductase that uses ascorbate as an electron donor in the cytoplasm and transfers electrons across membranes to reduce iron cations Fe(3+) into Fe(2+) in the lumen of the late endosome and lysosome. Reduced iron can then be extruded from the late endosome and lysosome to the cytoplasm by divalent metal-specific transporters. It is therefore most probably involved in endosomal and lysosomal cellular iron homeostasis. This Danio rerio (Zebrafish) protein is Lysosomal membrane ascorbate-dependent ferrireductase CYB561A3 (cyb561a3a).